A 472-amino-acid chain; its full sequence is P2X purinoceptor 2 (472 aa).

The Cytoplasmic segment spans residues 1–34 (MVRRLARGCWSAFWDYETPKVIVVRNRRLGFVHR). 6 disulfide bridges follow: Cys9/Cys430, Cys113/Cys164, Cys124/Cys147, Cys130/Cys158, Cys214/Cys224, and Cys258/Cys267. A helical membrane pass occupies residues 35 to 52 (MVQLLILLYFVWYVFIVQ). The Extracellular segment spans residues 53-326 (KSYQDSETGP…IVHGQAGKFS (274 aa)). Residues Lys69 and Lys71 each contribute to the ATP site. Asn182 carries an N-linked (GlcNAc...) asparagine glycan. Residue Thr184 coordinates ATP. N-linked (GlcNAc...) asparagine glycosylation is present at Asn239. Residues Ser284, Asn288, and Arg290 each coordinate ATP. Residue Asn298 is glycosylated (N-linked (GlcNAc...) asparagine). Lys308 is an ATP binding site. The segment at 309–322 (AYGIRIDVIVHGQA) is pore-forming motif. Residues 327 to 347 (LIPTIINLATALTSIGVGSFL) traverse the membrane as a helical segment. The Cytoplasmic portion of the chain corresponds to 348–472 (CDWILLTFMN…STDPKGLAQL (125 aa)). A disordered region spans residues 393-472 (PPPSHYSQDQ…STDPKGLAQL (80 aa)). The span at 456 to 465 (PSQQDSTSTD) shows a compositional bias: polar residues.

Belongs to the P2X receptor family. Homotrimer and heterotrimer; functional P2XRs are organized as homomeric and heteromeric trimers. Homotrimer. Forms heterotrimer with P2RX1. Forms heterotrimer with P2RX6. Forms heterotrimer with P2RX3. As to expression, high levels in pituitary and vas deferens. Lower extent in spinal cord, bladder, brain, adrenal, testis, sensory epithelia from the inner ear.

It is found in the cell membrane. The catalysed reaction is Ca(2+)(in) = Ca(2+)(out). The enzyme catalyses K(+)(in) = K(+)(out). It carries out the reaction Na(+)(in) = Na(+)(out). With respect to regulation, fast activation by external ATP. Exhibits slow desensitization during prolonged ATP activation. Not sensitive to the ATP agonist:alpha/beta-methylene-ATP. Its function is as follows. ATP-gated nonselective transmembrane cation channel permeable to potassium, sodium and calcium. Activation by extracellular ATP induces a variety of cellular responses, such as excitatory postsynaptic responses in sensory neurons, neuromuscular junctions (NMJ) formation, hearing, perception of taste and peristalsis. In the inner ear, regulates sound transduction and auditory neurotransmission, outer hair cell electromotility, inner ear gap junctions, and K(+) recycling. Mediates synaptic transmission between neurons and from neurons to smooth muscle. This is P2X purinoceptor 2 (P2rx2) from Rattus norvegicus (Rat).